The primary structure comprises 496 residues: Alpha-amylase (496 aa).

Cysteine 29 and cysteine 85 form a disulfide bridge. Positions 99, 155, and 164 each coordinate Ca(2+). Arginine 192 contributes to the chloride binding site. Aspartate 194 acts as the Nucleophile in catalysis. Histidine 198 is a binding site for Ca(2+). Catalysis depends on glutamate 230, which acts as the Proton donor. Position 332 (arginine 332) interacts with chloride. 2 cysteine pairs are disulfide-bonded: cysteine 374/cysteine 380 and cysteine 448/cysteine 460.

Belongs to the glycosyl hydrolase 13 family. In terms of assembly, monomer. It depends on Ca(2+) as a cofactor. The cofactor is chloride. In terms of processing, disulfide bonds are present.

Its subcellular location is the secreted. It catalyses the reaction Endohydrolysis of (1-&gt;4)-alpha-D-glucosidic linkages in polysaccharides containing three or more (1-&gt;4)-alpha-linked D-glucose units.. With respect to regulation, inhibited by alpha-amylase inhibitors from wheat and rye. The most effective inhibitors are the wheat tetrameric alpha-amylase inhibitor (WTAI) and the rye dimeric alpha-amylase inhibitor (RDAI-1). Not inhibited by alpha-amylase inhibitor from barley. Its function is as follows. Aids in the digestion of starch and glycogen derived from food, such as skin scales, fungi and bacteria. The polypeptide is Alpha-amylase (Dermatophagoides pteronyssinus (European house dust mite)).